A 137-amino-acid chain; its full sequence is Putative pre-16S rRNA nuclease (137 aa).

It belongs to the YqgF nuclease family.

Its subcellular location is the cytoplasm. Functionally, could be a nuclease involved in processing of the 5'-end of pre-16S rRNA. The chain is Putative pre-16S rRNA nuclease from Bacillus cytotoxicus (strain DSM 22905 / CIP 110041 / 391-98 / NVH 391-98).